A 211-amino-acid chain; its full sequence is Large ribosomal subunit protein eL13 (211 aa).

N6-acetyllysine is present on Lys16. Residues Ser52, Ser77, and Ser106 each carry the phosphoserine modification. Residues Lys123 and Lys145 each participate in a glycyl lysine isopeptide (Lys-Gly) (interchain with G-Cter in SUMO2) cross-link. Residue Lys174 forms a Glycyl lysine isopeptide (Lys-Gly) (interchain with G-Cter in SUMO1); alternate linkage. Glycyl lysine isopeptide (Lys-Gly) (interchain with G-Cter in SUMO2); alternate cross-links involve residues Lys174 and Lys177. N6-acetyllysine; alternate is present on Lys177.

This sequence belongs to the eukaryotic ribosomal protein eL13 family. As to quaternary structure, component of the 60S large ribosomal subunit (LSU). In terms of tissue distribution, higher levels of expression in benign breast lesions than in carcinomas.

It is found in the cytoplasm. Functionally, component of the ribosome, a large ribonucleoprotein complex responsible for the synthesis of proteins in the cell. The small ribosomal subunit (SSU) binds messenger RNAs (mRNAs) and translates the encoded message by selecting cognate aminoacyl-transfer RNA (tRNA) molecules. The large subunit (LSU) contains the ribosomal catalytic site termed the peptidyl transferase center (PTC), which catalyzes the formation of peptide bonds, thereby polymerizing the amino acids delivered by tRNAs into a polypeptide chain. The nascent polypeptides leave the ribosome through a tunnel in the LSU and interact with protein factors that function in enzymatic processing, targeting, and the membrane insertion of nascent chains at the exit of the ribosomal tunnel. As part of the LSU, it is probably required for its formation and the maturation of rRNAs. Plays a role in bone development. In Homo sapiens (Human), this protein is Large ribosomal subunit protein eL13 (RPL13).